We begin with the raw amino-acid sequence, 321 residues long: Calcium-binding protein LPS1-alpha (321 aa).

EF-hand domains follow at residues 15–49 (DAIE…NWTE), 47–82 (WTEE…STKE), 85–120 (YSSD…IYTK), 121–156 (VVDG…KLPI), 165–200 (EYRE…STKY), 200–233 (YSDK…DGVS), 232–267 (VSKD…IYRQ), and 269–304 (VDFE…NCPY). Positions 29, 31, 33, 35, 40, 60, 62, 64, 66, 71, 98, 100, 102, 104, 109, 134, 136, 138, 140, 145, 178, 180, 182, 184, 189, 213, 215, 217, 219, 224, 245, 247, 249, 251, 256, 284, 286, 288, and 293 each coordinate Ca(2+).

In terms of tissue distribution, aboral ectoderm, a squamous epithelium covering the surface of the late stage embryo and larva.

Its function is as follows. Calcium-binding protein involved in larval development and metamorphosis. Likely to function as calcium buffers mediating the transport of calcium from the sea water to the blastocoel where calcium is required for skeleton formation. The protein is Calcium-binding protein LPS1-alpha of Lytechinus pictus (Painted sea urchin).